The sequence spans 175 residues: Pituitary adenylate cyclase-activating polypeptide (175 aa).

Positions 1–24 (MTMCSGARLALLVYGIIMHNSVSC) are cleaved as a signal peptide. A propeptide spanning residues 25–78 (SPAAGLSFPGIRPEEEAYDQDGNPLQDFYDWDPPGAGSPASALRDAYALYYPAD) is cleaved from the precursor. Positions 149 to 157 (VKKYLAAVL) are important for receptor binding. Leucine 157 bears the Leucine amide mark. Lysine 168 bears the Lysine amide mark. The propeptide occupies 172–175 (IAYL).

The protein belongs to the glucagon family.

The protein resides in the secreted. PACAP is a neuropeptide involved in diverse array of physiological processes through activating the PACAP subfamily of class B1 G protein-coupled receptors: VIP receptor 1 (VIPR1), VIP receptor 2 (VIPR2), and PACAP type I receptor (ADCYAP1R1). Exerts neuroprotective and general cytoprotective effects due to anti-apoptotic, anti-inflammatory, and antioxidant actions. Promotes neuron projection development through the RAPGEF2/Rap1/B-Raf/ERK pathway. In chromaffin cells, induces long-lasting increase of intracellular calcium concentrations and neuroendocrine secretion. Involved in the control of glucose homeostasis, induces insulin secretion by pancreatic beta cells. PACAP exists in two bioactive forms from proteolysis of the same precursor protein, PACAP27 and PACAP38, which differ by eleven amino acid residues in the C-terminus. This Rattus norvegicus (Rat) protein is Pituitary adenylate cyclase-activating polypeptide (Adcyap1).